The following is a 197-amino-acid chain: Large ribosomal subunit protein bL17 (197 aa).

The interval Arg-136 to Lys-197 is disordered. Residues Val-148 to Ala-187 show a composition bias toward acidic residues. The span at Asp-188–Lys-197 shows a compositional bias: basic and acidic residues.

It belongs to the bacterial ribosomal protein bL17 family. As to quaternary structure, part of the 50S ribosomal subunit. Contacts protein L32.

In Beutenbergia cavernae (strain ATCC BAA-8 / DSM 12333 / CCUG 43141 / JCM 11478 / NBRC 16432 / NCIMB 13614 / HKI 0122), this protein is Large ribosomal subunit protein bL17.